The chain runs to 110 residues: Large ribosomal subunit protein uL22 (110 aa).

The protein belongs to the universal ribosomal protein uL22 family. In terms of assembly, part of the 50S ribosomal subunit.

In terms of biological role, this protein binds specifically to 23S rRNA; its binding is stimulated by other ribosomal proteins, e.g. L4, L17, and L20. It is important during the early stages of 50S assembly. It makes multiple contacts with different domains of the 23S rRNA in the assembled 50S subunit and ribosome. Functionally, the globular domain of the protein is located near the polypeptide exit tunnel on the outside of the subunit, while an extended beta-hairpin is found that lines the wall of the exit tunnel in the center of the 70S ribosome. This is Large ribosomal subunit protein uL22 from Aliivibrio fischeri (strain MJ11) (Vibrio fischeri).